The sequence spans 291 residues: U3 small nucleolar ribonucleoprotein protein IMP4 (291 aa).

The Brix domain occupies proline 83–glutamate 264.

In terms of assembly, part of the small subunit (SSU) processome, composed of more than 70 proteins and the RNA chaperone small nucleolar RNA (snoRNA) U3. Component of a heterotrimeric complex containing IMP3, IMP4 and MPHOSPH10. Interacts with MPHOSPH10.

It is found in the nucleus. The protein resides in the nucleolus. Its function is as follows. Component of the 60-80S U3 small nucleolar ribonucleoprotein (U3 snoRNP). Required for the early cleavages during pre-18S ribosomal RNA processing. Part of the small subunit (SSU) processome, first precursor of the small eukaryotic ribosomal subunit. During the assembly of the SSU processome in the nucleolus, many ribosome biogenesis factors, an RNA chaperone and ribosomal proteins associate with the nascent pre-rRNA and work in concert to generate RNA folding, modifications, rearrangements and cleavage as well as targeted degradation of pre-ribosomal RNA by the RNA exosome. This is U3 small nucleolar ribonucleoprotein protein IMP4 from Homo sapiens (Human).